A 26-amino-acid polypeptide reads, in one-letter code: Hemocyanin subunit 5 (26 aa).

The protein belongs to the tyrosinase family. Hemocyanin subfamily. As to expression, hemolymph.

It localises to the secreted. The protein resides in the extracellular space. Hemocyanins are copper-containing oxygen carriers occurring freely dissolved in the hemolymph of many mollusks and arthropods. The sequence is that of Hemocyanin subunit 5 from Maja squinado (Mediterranean spider crab).